Here is a 143-residue protein sequence, read N- to C-terminus: MAEAARQELENQLRQTIETLVEISLLVHDTTGSQENKEGLIEQMDTLVKEFQRLKEIKCDKQIPIDVIDYIDQGRNPDVYTREFVELLLKQNQFIHGKMDIYTVSKGVRESTSDDIPLDISCGAHSNTEISTNPGQKRQGNVS.

A disordered region spans residues 123–143 (GAHSNTEISTNPGQKRQGNVS). Residues 124-143 (AHSNTEISTNPGQKRQGNVS) show a composition bias toward polar residues.

It belongs to the Mediator complex subunit 10 family. As to quaternary structure, component of the Mediator complex.

Its subcellular location is the nucleus. Its function is as follows. Component of the Mediator complex, a coactivator involved in the regulated transcription of nearly all RNA polymerase II-dependent genes. Mediator functions as a bridge to convey information from gene-specific regulatory proteins to the basal RNA polymerase II transcription machinery. Mediator is recruited to promoters by direct interactions with regulatory proteins and serves as a scaffold for the assembly of a functional preinitiation complex with RNA polymerase II and the general transcription factors. This is Mediator of RNA polymerase II transcription subunit 10 (NUT2) from Yarrowia lipolytica (strain CLIB 122 / E 150) (Yeast).